A 281-amino-acid polypeptide reads, in one-letter code: Glyoxalase 1 (281 aa).

2 consecutive VOC domains span residues 4 to 127 (RALH…IGKA) and 132 to 251 (KVLR…FVGD).

Belongs to the glyoxalase I family. As to expression, expressed in the following tissues in both larvae and adults: pharynx, pharyngeal-intestinal valve, intestine, anal sphincter, vulval muscle, seam cells and the nervous system.

Its function is as follows. Thought to act as a glyoxalase. May remove methylglyoxal from mitochondrial proteins. Has roles in reducing oxidative stress and increasing lifespan. The sequence is that of Glyoxalase 1 (glod-4) from Caenorhabditis elegans.